The chain runs to 339 residues: ATPase GET3 (339 aa).

ATP is bound at residue 37-44; the sequence is KGGVGKTT. Asp-66 is an active-site residue. The ATP site is built by Glu-237 and Asn-264. Zn(2+)-binding residues include Cys-275 and Cys-278.

Belongs to the arsA ATPase family. In terms of assembly, homodimer.

It is found in the cytoplasm. The protein localises to the endoplasmic reticulum. ATPase required for the post-translational delivery of tail-anchored (TA) proteins to the endoplasmic reticulum. Recognizes and selectively binds the transmembrane domain of TA proteins in the cytosol. This complex then targets to the endoplasmic reticulum by membrane-bound receptors, where the tail-anchored protein is released for insertion. This process is regulated by ATP binding and hydrolysis. ATP binding drives the homodimer towards the closed dimer state, facilitating recognition of newly synthesized TA membrane proteins. ATP hydrolysis is required for insertion. Subsequently, the homodimer reverts towards the open dimer state, lowering its affinity for the membrane-bound receptor, and returning it to the cytosol to initiate a new round of targeting. The protein is ATPase GET3 of Rhodotorula glutinis (Yeast).